We begin with the raw amino-acid sequence, 335 residues long: Ketol-acid reductoisomerase (NAD(P)(+)) (335 aa).

The KARI N-terminal Rossmann domain occupies 5-185 (AKIYTDKDTT…GGTRAGAIET (181 aa)). NADP(+)-binding positions include 28–31 (YGSQ), Arg52, Ser56, and 86–89 (DMAQ). The active site involves His111. Residue Gly137 participates in NADP(+) binding. The KARI C-terminal knotted domain occupies 186–331 (TFKEETETDL…RRLKEIIERG (146 aa)). The Mg(2+) site is built by Asp194, Glu198, Glu230, and Glu234. Ser255 contacts substrate. Positions 301–335 (GSPTLSKGLEEMDKSLEEQTGRRLKEIIERGRPKS) are disordered. A compositionally biased stretch (basic and acidic residues) spans 308-335 (GLEEMDKSLEEQTGRRLKEIIERGRPKS).

This sequence belongs to the ketol-acid reductoisomerase family. The cofactor is Mg(2+).

It catalyses the reaction (2R)-2,3-dihydroxy-3-methylbutanoate + NAD(+) = (2S)-2-acetolactate + NADH + H(+). The catalysed reaction is (2R)-2,3-dihydroxy-3-methylbutanoate + NADP(+) = (2S)-2-acetolactate + NADPH + H(+). The protein operates within amino-acid biosynthesis; L-isoleucine biosynthesis; L-isoleucine from 2-oxobutanoate: step 2/4. It functions in the pathway amino-acid biosynthesis; L-valine biosynthesis; L-valine from pyruvate: step 2/4. Involved in the biosynthesis of branched-chain amino acids (BCAA). Catalyzes an alkyl-migration followed by a ketol-acid reduction of (S)-2-acetolactate (S2AL) to yield (R)-2,3-dihydroxy-isovalerate. In the isomerase reaction, S2AL is rearranged via a Mg-dependent methyl migration to produce 3-hydroxy-3-methyl-2-ketobutyrate (HMKB). In the reductase reaction, this 2-ketoacid undergoes a metal-dependent reduction by NADPH or NADH to yield (R)-2,3-dihydroxy-isovalerate. The sequence is that of Ketol-acid reductoisomerase (NAD(P)(+)) from Metallosphaera sedula (strain ATCC 51363 / DSM 5348 / JCM 9185 / NBRC 15509 / TH2).